A 354-amino-acid chain; its full sequence is MLVLGIESSCDETGVALYDTERGLRAHCLHTQMAMHAEYGGVVPELASRDHIRRLVPLTEGCLAQAGASYGDIDAVAFTQGPGLGGALLAGSSYANALALALDKPVIPVHHLEGHLLSPLLAEEKPDFPFVALLVSGGHTQIMAVRGIGDYALLGESVDDAAGEAFDKTAKLLGLPYPGGAKLSELAESGRPEAFVFPRPMIHSDDLQMSFSGLKTAVLTAVEKVRAENGADDIPEQTRNDICRAFQDAVVDVLAAKVKKALLQTGFRTVVVAGGVGANRKLRETFGNMTVQIPTPKGKPKHPSEKVSVFFPPMAYCTDNGAMIAFAGAMHLGKGREVGAFNVRPRWPLSEIVR.

Positions 111 and 115 each coordinate Fe cation. Residues 134 to 138 (LVSGG), Asp-167, Gly-180, and Asn-279 contribute to the substrate site. Asp-319 is a binding site for Fe cation.

Belongs to the KAE1 / TsaD family. Fe(2+) is required as a cofactor.

It localises to the cytoplasm. The catalysed reaction is L-threonylcarbamoyladenylate + adenosine(37) in tRNA = N(6)-L-threonylcarbamoyladenosine(37) in tRNA + AMP + H(+). Required for the formation of a threonylcarbamoyl group on adenosine at position 37 (t(6)A37) in tRNAs that read codons beginning with adenine. Is involved in the transfer of the threonylcarbamoyl moiety of threonylcarbamoyl-AMP (TC-AMP) to the N6 group of A37, together with TsaE and TsaB. TsaD likely plays a direct catalytic role in this reaction. This Neisseria meningitidis protein is tRNA N6-adenosine threonylcarbamoyltransferase.